The primary structure comprises 274 residues: MAHYFVGDVQGCFAELQRLLAKVDFNPSCDELWAVGDLVARGPDSLATLRYFQSLGDAGKTVLGNHDLHLLALHGKLKRDKPSDNLTPLLNAPDIASLIDWLRQQPLMRELPEHKIIMTHAGVPPQWSLEVLRQESQLVSQALKQSDYLDALISQMYSDTAERWEPSAIGINRLRFCINALTRMRYLYVDGHLDFDCKQPPEDCTNPQLRPWFEFTSALRQSHTLVFGHWAALMGKVNDPKLKALDTGCCWGEYLTLWHLEKDQKITQKRLKKG.

Belongs to the Ap4A hydrolase family.

It carries out the reaction P(1),P(4)-bis(5'-adenosyl) tetraphosphate + H2O = 2 ADP + 2 H(+). Hydrolyzes diadenosine 5',5'''-P1,P4-tetraphosphate to yield ADP. The sequence is that of Bis(5'-nucleosyl)-tetraphosphatase, symmetrical from Shewanella sp. (strain ANA-3).